The chain runs to 120 residues: Large ribosomal subunit protein uL22 (120 aa).

This sequence belongs to the universal ribosomal protein uL22 family. As to quaternary structure, part of the 50S ribosomal subunit.

Functionally, this protein binds specifically to 23S rRNA; its binding is stimulated by other ribosomal proteins, e.g. L4, L17, and L20. It is important during the early stages of 50S assembly. It makes multiple contacts with different domains of the 23S rRNA in the assembled 50S subunit and ribosome. The globular domain of the protein is located near the polypeptide exit tunnel on the outside of the subunit, while an extended beta-hairpin is found that lines the wall of the exit tunnel in the center of the 70S ribosome. The chain is Large ribosomal subunit protein uL22 from Corynebacterium diphtheriae (strain ATCC 700971 / NCTC 13129 / Biotype gravis).